An 883-amino-acid chain; its full sequence is Chromatin structure-remodeling complex protein RSC30 (883 aa).

Residues 14–45 (ACTQCRKRKIGCDRAKPICGNCVKYNKPDCFY) constitute a DNA-binding region (zn(2)-C6 fungal-type). Disordered regions lie at residues 121–157 (QNNN…DVPS) and 241–273 (NTTA…TSRT). The span at 130 to 149 (APRQNSSTVSSNVHGNTIVR) shows a compositional bias: polar residues. Ser150 is subject to Phosphoserine. Over residues 241-251 (NTTANKINKTG) the composition is skewed to polar residues. The span at 252 to 270 (ENSKKGKVDGKRAGFDHQT) shows a compositional bias: basic and acidic residues.

In terms of assembly, forms a heteromer with RSC3. Interacts with NPL6. Component of the two forms of the RSC complex composed of at least either RSC1 or RSC2, and ARP7, ARP9, LDB7, NPL6, RSC3, RSC30, RSC4, RSC58, RSC6, RSC8, RSC9, SFH1, STH1, HTL1 and probably RTT102. The complexes interact with histone and histone variant components of centromeric chromatin. Component of a fungal-specific module (HTL1-LDB7-NPL6-RSC3-RSC30) within the RSC complex.

Its subcellular location is the nucleus. Its function is as follows. Component of the chromatin structure-remodeling complex (RSC), which is involved in transcription regulation and nucleosome positioning. RSC is responsible for the transfer of a histone octamer from a nucleosome core particle to naked DNA. The reaction requires ATP and involves an activated RSC-nucleosome intermediate. Remodeling reaction also involves DNA translocation, DNA twist and conformational change. As a reconfigurer of centromeric and flanking nucleosomes, RSC complex is required both for proper kinetochore function in chromosome segregation and, via a PKC1-dependent signaling pathway, for organization of the cellular cytoskeleton. This subunit is required for transcription of ribosomal protein genes and genes involved in the integrity of the cell wall. Together with HTL1, LDB7, NPL6, RSC3 components, defines a fungal-specific module within the RSC complex that plays a role in many cellular functions including the maintenance of cell wall integrity. This is Chromatin structure-remodeling complex protein RSC30 (RSC30) from Saccharomyces cerevisiae (strain ATCC 204508 / S288c) (Baker's yeast).